Here is a 622-residue protein sequence, read N- to C-terminus: MKGQETRGFQSEVKQLLHLMIHSLYSNKEIFLRELISNASDAADKLRFRALSNPELFEGDGELRVRLSFDKEKRTLTLSDNGIGMTRDEVIDNLGTIAKSGTKAFLESIGSDQAKDSQLIGQFGVGFYSAFIVADKVTVRTRAAGAPADTGVFWESAGEGDYTIADITKDERGTEITLHLREGEDEYLDDWRLRSVISKYSDHIALPVEIQVKNEEDGTVTWEKINKAQALWTRGKAEISDDEYKAFYKHIAHDFTDPLSWSHNRVEGKQEYTSLLYIPAQAPWDMWNRDHKHGLKLYVQRVFIMDEAEQFMPNYLRFVRGLIDSNDLPLNVSREILQDSRITQNLRSALTKRVLQMLEKLAKDDAEKYQQFWQQFGMALKEGPAEDGSNKETIAKLLRFASTHTDSSAQTVSLEDYVSRMAEGQEKIYYITADSYAAAKSSPHLELFRKKGIEVLLLSDRIDEWMMSYLTEFEGKAFQSVSKADDSLNKLADEENPEQQEAEKALEPFVERVKTLLGERVKDVRLTHRLTDTPAIVTTDADEMSTQMAKLFAAAGQQAPEVKYIFELNPDHGLVKRAAEVTDDTQFAQWVELLLDQALLAERGTLEDPNQFIRRMNQLLTA.

Residues Met1 to Arg334 are a; substrate-binding. The segment at Glu335 to Lys550 is b. The segment at Leu551–Ala622 is c.

The protein belongs to the heat shock protein 90 family. As to quaternary structure, homodimer.

It localises to the cytoplasm. In terms of biological role, molecular chaperone. Has ATPase activity. The polypeptide is Chaperone protein HtpG (Yersinia pestis).